The chain runs to 229 residues: Large ribosomal subunit protein uL1 (229 aa).

The protein belongs to the universal ribosomal protein uL1 family. Part of the 50S ribosomal subunit.

In terms of biological role, binds directly to 23S rRNA. The L1 stalk is quite mobile in the ribosome, and is involved in E site tRNA release. Its function is as follows. Protein L1 is also a translational repressor protein, it controls the translation of the L11 operon by binding to its mRNA. In Caulobacter sp. (strain K31), this protein is Large ribosomal subunit protein uL1.